Reading from the N-terminus, the 153-residue chain is Ribosomal RNA large subunit methyltransferase H (153 aa).

Residues Leu-63, Gly-102, and 121–126 (FGKITL) contribute to the S-adenosyl-L-methionine site.

This sequence belongs to the RNA methyltransferase RlmH family. Homodimer.

The protein localises to the cytoplasm. It catalyses the reaction pseudouridine(1915) in 23S rRNA + S-adenosyl-L-methionine = N(3)-methylpseudouridine(1915) in 23S rRNA + S-adenosyl-L-homocysteine + H(+). Functionally, specifically methylates the pseudouridine at position 1915 (m3Psi1915) in 23S rRNA. This chain is Ribosomal RNA large subunit methyltransferase H, found in Sulfurovum sp. (strain NBC37-1).